Reading from the N-terminus, the 1759-residue chain is Zinc finger protein castor homolog 1 (1759 aa).

2 disordered regions span residues 1-26 and 46-175; these read MDLG…PKRK and KRAD…SSLR. 2 stretches are compositionally biased toward basic and acidic residues: residues 77–88 and 137–160; these read PRSEEDKRRAVI and EEPS…KEDS. Polar residues predominate over residues 161–171; sequence GPSTRQASGEA. Lys-288 is covalently cross-linked (Glycyl lysine isopeptide (Lys-Gly) (interchain with G-Cter in SUMO2)). The segment at 374-420 is disordered; it reads SKYDVRGIQKPGPAKVPPTPSLAPAPLASVPSAPSAPGPGPEPPASL. Residues 387–396 are compositionally biased toward pro residues; that stretch reads AKVPPTPSLA. Low complexity predominate over residues 397-406; that stretch reads PAPLASVPSA. The segment covering 407–417 has biased composition (pro residues); sequence PSAPGPGPEPP. 3 consecutive C2H2-type zinc fingers follow at residues 551–575, 610–634, and 668–692; these read YHCM…ENFH, FHCR…KSYH, and FHCI…KRKH. 4 disordered regions span residues 686 to 723, 736 to 776, 824 to 843, and 889 to 949; these read TSHK…SSND, SSLS…SGLL, VSSG…VASG, and ATFD…AVPA. Basic residues predominate over residues 687–698; the sequence is SHKRKHERRHIR. Residues 699 to 712 are compositionally biased toward low complexity; the sequence is SSGALGLPPSLLGA. Phosphoserine occurs at positions 720 and 721. Over residues 736-764 the composition is skewed to low complexity; it reads SSLSASPTSQQSSASLAAATAATEAGPSA. Basic and acidic residues predominate over residues 925–939; it reads ASQDRSLDLTVKEPS. Lys-975 is covalently cross-linked (Glycyl lysine isopeptide (Lys-Gly) (interchain with G-Cter in SUMO2)). Position 981 is a phosphoserine (Ser-981). A C2H2-type 4 zinc finger spans residues 1031–1055; it reads FHCVVEECGALFSTLDGAIKHANFH. A disordered region spans residues 1067–1111; the sequence is TEAAFPASAAETKPPMAPSSPPVPPVTTATVSSLEGPAPSPASVP. Residues 1081 to 1091 are compositionally biased toward pro residues; sequence PMAPSSPPVPP. The C2H2-type 5 zinc-finger motif lies at 1300–1324; sequence FHCIREGCQFSFLLKHQMTSHARKH. The interval 1367–1392 is disordered; sequence ESSTMDRSCSSTPVGNESTAAGNTIS. 3 consecutive C2H2-type zinc fingers follow at residues 1457–1481, 1515–1537, and 1571–1595; these read YHCT…AQHH, FHCL…RKHH, and FHCT…KRKH. Disordered regions lie at residues 1589-1620 and 1643-1736; these read DSHK…DGSL and LGDA…AGAR. Residues 1655 to 1673 show a composition bias toward low complexity; it reads AAPGPREGAAAAAAAAGES. Residues 1674–1723 are compositionally biased toward acidic residues; it reads SQEDEEEELELPEEEAEDDEDEDDDEDDDDEDDDEDDDDEDLRTDSEESL. Positions 1724 to 1736 are enriched in low complexity; that stretch reads PEAAAEAAGAGAR.

As to expression, expressed in heart, lung, skeletal muscle, pancreas, testis, small intestine, and stomach, but it is not detectable in the adult brain.

The protein localises to the nucleus. Transcriptional activator. Involved in vascular assembly and morphogenesis through direct transcriptional regulation of EGFL7. The chain is Zinc finger protein castor homolog 1 (CASZ1) from Homo sapiens (Human).